Reading from the N-terminus, the 454-residue chain is tRNA modification GTPase MnmE (454 aa).

(6S)-5-formyl-5,6,7,8-tetrahydrofolate-binding residues include R23, E80, and K120. Residues 216 to 377 (GMKVVIAGRP…LRNNLKQSMG (162 aa)) enclose the TrmE-type G domain. N226 provides a ligand contact to K(+). Residues 226 to 231 (NAGKSS), 245 to 251 (TDIAGTT), 270 to 273 (DTAG), 335 to 338 (NKAD), and 358 to 360 (SAR) each bind GTP. S230 is a Mg(2+) binding site. Residues T245, I247, and T250 each contribute to the K(+) site. T251 serves as a coordination point for Mg(2+). (6S)-5-formyl-5,6,7,8-tetrahydrofolate is bound at residue K454.

Belongs to the TRAFAC class TrmE-Era-EngA-EngB-Septin-like GTPase superfamily. TrmE GTPase family. In terms of assembly, homodimer. Heterotetramer of two MnmE and two MnmG subunits. Requires K(+) as cofactor.

It localises to the cytoplasm. Exhibits a very high intrinsic GTPase hydrolysis rate. Involved in the addition of a carboxymethylaminomethyl (cmnm) group at the wobble position (U34) of certain tRNAs, forming tRNA-cmnm(5)s(2)U34. The chain is tRNA modification GTPase MnmE from Salmonella paratyphi A (strain AKU_12601).